A 407-amino-acid chain; its full sequence is Carbamoyl phosphate synthase small chain (407 aa).

A CPSase region spans residues 1–203; sequence MSQNESGTIA…EPCGEYEGKE (203 aa). L-glutamine contacts are provided by S61, G255, and G257. One can recognise a Glutamine amidotransferase type-1 domain in the interval 207 to 405; the sequence is TVAAVDLGIK…CELMKNNSKE (199 aa). C283 functions as the Nucleophile in the catalytic mechanism. Positions 284, 287, 325, 327, and 328 each coordinate L-glutamine. Active-site residues include H378 and E380.

The protein belongs to the CarA family. Composed of two chains; the small (or glutamine) chain promotes the hydrolysis of glutamine to ammonia, which is used by the large (or ammonia) chain to synthesize carbamoyl phosphate. Tetramer of heterodimers (alpha,beta)4.

The enzyme catalyses hydrogencarbonate + L-glutamine + 2 ATP + H2O = carbamoyl phosphate + L-glutamate + 2 ADP + phosphate + 2 H(+). It carries out the reaction L-glutamine + H2O = L-glutamate + NH4(+). Its pathway is amino-acid biosynthesis; L-arginine biosynthesis; carbamoyl phosphate from bicarbonate: step 1/1. The protein operates within pyrimidine metabolism; UMP biosynthesis via de novo pathway; (S)-dihydroorotate from bicarbonate: step 1/3. Functionally, small subunit of the glutamine-dependent carbamoyl phosphate synthetase (CPSase). CPSase catalyzes the formation of carbamoyl phosphate from the ammonia moiety of glutamine, carbonate, and phosphate donated by ATP, constituting the first step of 2 biosynthetic pathways, one leading to arginine and/or urea and the other to pyrimidine nucleotides. The small subunit (glutamine amidotransferase) binds and cleaves glutamine to supply the large subunit with the substrate ammonia. The sequence is that of Carbamoyl phosphate synthase small chain from Bifidobacterium longum (strain NCC 2705).